The chain runs to 264 residues: Indole-3-glycerol phosphate synthase (264 aa).

This sequence belongs to the TrpC family.

It carries out the reaction 1-(2-carboxyphenylamino)-1-deoxy-D-ribulose 5-phosphate + H(+) = (1S,2R)-1-C-(indol-3-yl)glycerol 3-phosphate + CO2 + H2O. Its pathway is amino-acid biosynthesis; L-tryptophan biosynthesis; L-tryptophan from chorismate: step 4/5. The polypeptide is Indole-3-glycerol phosphate synthase (Stenotrophomonas maltophilia (strain R551-3)).